A 328-amino-acid polypeptide reads, in one-letter code: UPF0194 membrane protein YPTS_1292 (328 aa).

Residues 1–22 (MNRKKIIVAAVIVALLATLAYG) form the signal peptide. 2 coiled-coil regions span residues 80–109 (YLNA…REEE) and 142–209 (AVSA…ILLA).

It belongs to the UPF0194 family.

It is found in the periplasm. This is UPF0194 membrane protein YPTS_1292 from Yersinia pseudotuberculosis serotype IB (strain PB1/+).